Consider the following 172-residue polypeptide: NADH-ubiquinone oxidoreductase chain 6 (172 aa).

Helical transmembrane passes span 1–21, 24–44, 53–73, 86–106, and 140–160; these read MAFY…AIAS, APYF…GILV, LILF…SAAL, VVFW…GFLL, and GKML…VLEV.

The protein belongs to the complex I subunit 6 family. Core subunit of respiratory chain NADH dehydrogenase (Complex I) which is composed of 45 different subunits.

Its subcellular location is the mitochondrion inner membrane. It carries out the reaction a ubiquinone + NADH + 5 H(+)(in) = a ubiquinol + NAD(+) + 4 H(+)(out). Its function is as follows. Core subunit of the mitochondrial membrane respiratory chain NADH dehydrogenase (Complex I) which catalyzes electron transfer from NADH through the respiratory chain, using ubiquinone as an electron acceptor. Essential for the catalytic activity and assembly of complex I. This is NADH-ubiquinone oxidoreductase chain 6 (mt-nd6) from Danio rerio (Zebrafish).